A 235-amino-acid polypeptide reads, in one-letter code: Intron-encoded endonuclease I-SceI (235 aa).

The protein belongs to the LAGLIDADG endonuclease family. In terms of assembly, monomer. Mg(2+) is required as a cofactor.

It localises to the mitochondrion. Its function is as follows. Mitochondrial DNA endonuclease involved in intron homing. It introduces a specific double-strand break in the DNA of the 21S rRNA gene and thus mediates the insertion of an intron, containing its own coding sequence (group I intron), into an intronless gene. Specifically recognizes and cleaves the sequence 5'-TAGGGATAACAGGGTAAT-3'. In Saccharomyces cerevisiae (strain ATCC 204508 / S288c) (Baker's yeast), this protein is Intron-encoded endonuclease I-SceI (SCEI).